A 412-amino-acid polypeptide reads, in one-letter code: Multifunctional CCA protein (412 aa).

G8 and R11 together coordinate ATP. Residues G8 and R11 each coordinate CTP. Mg(2+) is bound by residues E21 and D23. Positions 91, 137, and 140 each coordinate ATP. Positions 91, 137, and 140 each coordinate CTP. In terms of domain architecture, HD spans 228 to 329 (CGIHTLMSLQ…WRLLQRLDVL (102 aa)).

Belongs to the tRNA nucleotidyltransferase/poly(A) polymerase family. Bacterial CCA-adding enzyme type 1 subfamily. As to quaternary structure, monomer. Can also form homodimers and oligomers. The cofactor is Mg(2+). Ni(2+) serves as cofactor.

It carries out the reaction a tRNA precursor + 2 CTP + ATP = a tRNA with a 3' CCA end + 3 diphosphate. It catalyses the reaction a tRNA with a 3' CCA end + 2 CTP + ATP = a tRNA with a 3' CCACCA end + 3 diphosphate. Functionally, catalyzes the addition and repair of the essential 3'-terminal CCA sequence in tRNAs without using a nucleic acid template. Adds these three nucleotides in the order of C, C, and A to the tRNA nucleotide-73, using CTP and ATP as substrates and producing inorganic pyrophosphate. tRNA 3'-terminal CCA addition is required both for tRNA processing and repair. Also involved in tRNA surveillance by mediating tandem CCA addition to generate a CCACCA at the 3' terminus of unstable tRNAs. While stable tRNAs receive only 3'-terminal CCA, unstable tRNAs are marked with CCACCA and rapidly degraded. The sequence is that of Multifunctional CCA protein from Acinetobacter baumannii (strain ATCC 17978 / DSM 105126 / CIP 53.77 / LMG 1025 / NCDC KC755 / 5377).